The following is a 781-amino-acid chain: Mitochondrial inner membrane m-AAA protease component paraplegin (781 aa).

A mitochondrion-targeting transit peptide spans 1–43; it reads MAAALLLLRGLRPGPEPRPRRLWGLLSGRGPGLSSGAGARRPY. Disordered regions lie at residues 22–56 and 103–135; these read LWGLLSGRGPGLSSGAGARRPYAARGTPVGPAAAG and TSRMKQKNKDNDKPKGKTPEDDEEEKRRKERED. Low complexity predominate over residues 36–56; sequence GAGARRPYAARGTPVGPAAAG. The propeptide at 44–105 is removed in mature form; it reads AARGTPVGPA…GSTLYFNTSR (62 aa). Over 106-144 the chain is Mitochondrial matrix; that stretch reads MKQKNKDNDKPKGKTPEDDEEEKRRKEREDQMYRERLRT. Basic and acidic residues predominate over residues 109-135; the sequence is KNKDNDKPKGKTPEDDEEEKRRKERED. The helical transmembrane segment at 145–165 threads the bilayer; that stretch reads LFIIALVMSLLNSLSTSGGSI. At 166–248 the chain is on the mitochondrial intermembrane side; sequence SWADFVNEML…DRIPVSYKRT (83 aa). The helical transmembrane segment at 249-269 threads the bilayer; sequence GFFGNALYALGMTAVGLAILW. Topologically, residues 270–781 are mitochondrial matrix; the sequence is YVFRLAGMTG…ASGEEEAPAP (512 aa). Alanine 312, glycine 352, cysteine 353, glycine 354, lysine 355, threonine 356, and leucine 357 together coordinate ATP. Position 505 is a 3'-nitrotyrosine (tyrosine 505). Histidine 574 serves as a coordination point for Zn(2+). Residue glutamate 575 is part of the active site. Zn(2+) contacts are provided by histidine 578 and aspartate 650. Positions 701–781 are interaction with PPIF; that stretch reads HEAKLLVAKA…ASGEEEAPAP (81 aa).

It in the N-terminal section; belongs to the AAA ATPase family. The protein in the C-terminal section; belongs to the peptidase M41 family. Forms heterohexamers with SPG7 and AFG3L1. The m-AAA protease is either composed of homohexamers of AFG3L2 or heterohexamers of AFG3L1, AFG3L2 and/or SPG7. Component of the mitochondrial permeability transition pore complex (mPTPC), at least composed of SPG7, VDAC1 and PPIF. Interacts with MAIP1. Zn(2+) is required as a cofactor. Upon import into the mitochondrion, the N-terminal transit peptide is cleaved by the mitochondrial-processing peptidase (MPP) to generate an intermediate form which undergoes a second proteolytic cleavage mediated by proteases AFG3L1 and/or AFG3L2 removing an additional N-terminal fragment to generate the proteolytically active mature form. Expressed in the brain and retina (at protein level).

It localises to the mitochondrion inner membrane. It catalyses the reaction ATP + H2O = ADP + phosphate + H(+). Catalytic component of the m-AAA protease, a protease that plays a key role in proteostasis of inner mitochondrial membrane proteins, and which is essential for axonal and neuron development. SPG7 possesses both ATPase and protease activities: the ATPase activity is required to unfold substrates, threading them into the internal proteolytic cavity for hydrolysis into small peptide fragments. The m-AAA protease exerts a dual role in the mitochondrial inner membrane: it mediates the processing of specific regulatory proteins and ensures protein quality control by degrading misfolded polypeptides. Mediates protein maturation of the mitochondrial ribosomal subunit MRPL32/bL32m by catalyzing the cleavage of the presequence of MRPL32/bL32m prior to assembly into the mitochondrial ribosome. Acts as a regulator of calcium in neurons by mediating degradation of SMDT1/EMRE before its assembly with the uniporter complex, limiting the availability of SMDT1/EMRE for MCU assembly and promoting efficient assembly of gatekeeper subunits with MCU. Also regulates mitochondrial calcium by catalyzing degradation of MCU. Plays a role in the formation and regulation of the mitochondrial permeability transition pore (mPTP) and its proteolytic activity is dispensable for this function. The chain is Mitochondrial inner membrane m-AAA protease component paraplegin from Mus musculus (Mouse).